Consider the following 92-residue polypeptide: Putative pterin-4-alpha-carbinolamine dehydratase (92 aa).

Belongs to the pterin-4-alpha-carbinolamine dehydratase family.

The enzyme catalyses (4aS,6R)-4a-hydroxy-L-erythro-5,6,7,8-tetrahydrobiopterin = (6R)-L-erythro-6,7-dihydrobiopterin + H2O. This Picosynechococcus sp. (strain ATCC 27264 / PCC 7002 / PR-6) (Agmenellum quadruplicatum) protein is Putative pterin-4-alpha-carbinolamine dehydratase.